Here is a 316-residue protein sequence, read N- to C-terminus: Probable cobalamin biosynthesis protein CobD (316 aa).

The next 5 membrane-spanning stretches (helical) occupy residues 1–21 (MITE…DIVL), 50–70 (ISGM…GFAL), 89–109 (ILAL…KSLI), 165–185 (PLFY…ALAF), and 294–314 (ISLI…LLIL).

Belongs to the CobD/CbiB family.

Its subcellular location is the cell membrane. Its pathway is cofactor biosynthesis; adenosylcobalamin biosynthesis. Functionally, converts cobyric acid to cobinamide by the addition of aminopropanol on the F carboxylic group. The protein is Probable cobalamin biosynthesis protein CobD of Methanothrix thermoacetophila (strain DSM 6194 / JCM 14653 / NBRC 101360 / PT) (Methanosaeta thermophila).